The primary structure comprises 307 residues: tRNA dimethylallyltransferase (307 aa).

ATP is bound at residue 9–16 (GPTAVGKT). 11–16 (TAVGKT) contributes to the substrate binding site. The tract at residues 34–37 (DSMQ) is interaction with substrate tRNA.

It belongs to the IPP transferase family. As to quaternary structure, monomer. Mg(2+) serves as cofactor.

It carries out the reaction adenosine(37) in tRNA + dimethylallyl diphosphate = N(6)-dimethylallyladenosine(37) in tRNA + diphosphate. Functionally, catalyzes the transfer of a dimethylallyl group onto the adenine at position 37 in tRNAs that read codons beginning with uridine, leading to the formation of N6-(dimethylallyl)adenosine (i(6)A). The protein is tRNA dimethylallyltransferase of Limosilactobacillus fermentum (strain NBRC 3956 / LMG 18251) (Lactobacillus fermentum).